The primary structure comprises 340 residues: Holliday junction branch migration complex subunit RuvB (340 aa).

Positions 1–184 (MNENLDPTNQ…FGIQSRLQYY (184 aa)) are large ATPase domain (RuvB-L). ATP is bound by residues leucine 23, arginine 24, glycine 65, lysine 68, threonine 69, threonine 70, 131-133 (EDF), arginine 174, tyrosine 184, and arginine 221. Residue threonine 69 participates in Mg(2+) binding. The small ATPAse domain (RuvB-S) stretch occupies residues 185–255 (NAELLTTIVQ…IAKFALNALH (71 aa)). Residues 258 to 340 (AHGLDEMDNK…VKANVQGGLF (83 aa)) form a head domain (RuvB-H) region. Residues arginine 313 and arginine 318 each contribute to the DNA site.

Belongs to the RuvB family. Homohexamer. Forms an RuvA(8)-RuvB(12)-Holliday junction (HJ) complex. HJ DNA is sandwiched between 2 RuvA tetramers; dsDNA enters through RuvA and exits via RuvB. An RuvB hexamer assembles on each DNA strand where it exits the tetramer. Each RuvB hexamer is contacted by two RuvA subunits (via domain III) on 2 adjacent RuvB subunits; this complex drives branch migration. In the full resolvosome a probable DNA-RuvA(4)-RuvB(12)-RuvC(2) complex forms which resolves the HJ.

It is found in the cytoplasm. It catalyses the reaction ATP + H2O = ADP + phosphate + H(+). The RuvA-RuvB-RuvC complex processes Holliday junction (HJ) DNA during genetic recombination and DNA repair, while the RuvA-RuvB complex plays an important role in the rescue of blocked DNA replication forks via replication fork reversal (RFR). RuvA specifically binds to HJ cruciform DNA, conferring on it an open structure. The RuvB hexamer acts as an ATP-dependent pump, pulling dsDNA into and through the RuvAB complex. RuvB forms 2 homohexamers on either side of HJ DNA bound by 1 or 2 RuvA tetramers; 4 subunits per hexamer contact DNA at a time. Coordinated motions by a converter formed by DNA-disengaged RuvB subunits stimulates ATP hydrolysis and nucleotide exchange. Immobilization of the converter enables RuvB to convert the ATP-contained energy into a lever motion, pulling 2 nucleotides of DNA out of the RuvA tetramer per ATP hydrolyzed, thus driving DNA branch migration. The RuvB motors rotate together with the DNA substrate, which together with the progressing nucleotide cycle form the mechanistic basis for DNA recombination by continuous HJ branch migration. Branch migration allows RuvC to scan DNA until it finds its consensus sequence, where it cleaves and resolves cruciform DNA. The sequence is that of Holliday junction branch migration complex subunit RuvB from Flavobacterium psychrophilum (strain ATCC 49511 / DSM 21280 / CIP 103535 / JIP02/86).